The primary structure comprises 127 residues: Mitochondrial pyruvate carrier 2 (127 aa).

Residues 2-40 are Mitochondrial matrix-facing; sequence SAAGARGLRATYHRLLDKVELMLPEKLRPLYNHPAGPRT. Residues 41 to 61 form a helical membrane-spanning segment; the sequence is VFFWAPIMKWGLVCAGLADMA. Over 62–72 the chain is Mitochondrial intermembrane; it reads RPAEKLSTAQS. The chain crosses the membrane as a helical span at residues 73–90; that stretch reads AVLMATGFIWSRYSLVII. The Mitochondrial matrix segment spans residues 91 to 95; it reads PKNWS. A helical transmembrane segment spans residues 96-115; the sequence is LFAVNFFVGAAGASQLFRIW. Residues 116–127 are Mitochondrial intermembrane-facing; that stretch reads RYNQELKAKAHK.

It belongs to the mitochondrial pyruvate carrier (MPC) (TC 2.A.105) family. In terms of assembly, homodimer. Homooligomer. Forms heterodimers with MPC1 and MPC1L. The heterodimer is the more stable and dominant form.

It is found in the mitochondrion inner membrane. The enzyme catalyses pyruvate(out) + H(+)(out) = pyruvate(in) + H(+)(in). In terms of biological role, mediates the uptake of pyruvate into mitochondria. In Homo sapiens (Human), this protein is Mitochondrial pyruvate carrier 2 (MPC2).